The following is a 319-amino-acid chain: Ferrochelatase (319 aa).

His193 and Glu274 together coordinate Fe cation.

The protein belongs to the ferrochelatase family.

Its subcellular location is the cytoplasm. The enzyme catalyses heme b + 2 H(+) = protoporphyrin IX + Fe(2+). The protein operates within porphyrin-containing compound metabolism; protoheme biosynthesis; protoheme from protoporphyrin-IX: step 1/1. In terms of biological role, catalyzes the ferrous insertion into protoporphyrin IX. This Actinobacillus pleuropneumoniae serotype 7 (strain AP76) protein is Ferrochelatase.